Consider the following 433-residue polypeptide: MTTTIRQFTSSSSIKGSSGLGGGSSRTSCRLSGSLGAGSCRLGSASGLGSALGGNSYSSCYSFGTGSGYGGNFGGVDGLLAGGEKATMQNLNDRLASYLDKVRALEEANTELEVKIRDWYQKQAPGPARDYSAYYQTIEDLKNKILVATVDNASILLQIDNARLAADDFRTKFETEQALRMSVEADINGLRRVLDELTLARADLEMQIENLKEELAYLKKNHEEEMNALRGQVGGEINVEMDAAPGVDLSRILSEMRDQYEKMAEKNRKDAEDWFFSKTEELNREVATNSELVQSGKSEISELRRTMQALEIELQSQLSMKASLEGSLAETENRYCVQLSQIQGLIGSVEEQLAQLRCEMEQQNQEYKILLDVKTRLEQEIATYRRLLEGEDAHLTQYKPKEPVTTRQVRTIVEEVQDGKVISSREQVHQTTR.

The disordered stretch occupies residues 1 to 24 (MTTTIRQFTSSSSIKGSSGLGGGS). The head stretch occupies residues 1–83 (MTTTIRQFTS…GGVDGLLAGG (83 aa)). Residues Ser12 and Ser13 each carry the phosphoserine modification. Residue Lys15 forms a Glycyl lysine isopeptide (Lys-Gly) (interchain with G-Cter in SUMO1); alternate linkage. A Glycyl lysine isopeptide (Lys-Gly) (interchain with G-Cter in SUMO2); alternate cross-link involves residue Lys15. Phosphoserine is present on residues Ser25, Ser32, Ser34, and Ser39. Ser44 bears the Phosphoserine; by RPS6KA1 mark. Positions 84-120 (EKATMQNLNDRLASYLDKVRALEEANTELEVKIRDWY) are coil 1A. Residues 84-395 (EKATMQNLND…RLLEGEDAHL (312 aa)) form the IF rod domain. Phosphothreonine is present on Thr110. Positions 121-138 (QKQAPGPARDYSAYYQTI) are linker 1. Residues 139 to 230 (EDLKNKILVA…NHEEEMNALR (92 aa)) are coil 1B. The segment at 231–250 (GQVGGEINVEMDAAPGVDLS) is linker 12. Positions 251–392 (RILSEMRDQY…TYRRLLEGED (142 aa)) are coil 2. Lys278 is covalently cross-linked (Glycyl lysine isopeptide (Lys-Gly) (interchain with G-Cter in SUMO2)). A Phosphothreonine modification is found at Thr279. Phosphoserine is present on Ser323. Positions 393–433 (AHLTQYKPKEPVTTRQVRTIVEEVQDGKVISSREQVHQTTR) are tail. Residues Lys399, Lys401, and Lys420 each participate in a glycyl lysine isopeptide (Lys-Gly) (interchain with G-Cter in SUMO1); alternate cross-link. Residues Lys399, Lys401, and Lys420 each participate in a glycyl lysine isopeptide (Lys-Gly) (interchain with G-Cter in SUMO2); alternate cross-link.

It belongs to the intermediate filament family. As to quaternary structure, heterodimer of a type I and a type II keratin. KRT17 associates with KRT6 isomers (KRT6A or KRT6B). Interacts with TRADD and SFN. Post-translationally, phosphorylation at Ser-44 occurs in a growth- and stress-dependent fashion in skin keratinocytes, it has no effect on filament organization.

It localises to the cytoplasm. Functionally, type I keratin involved in the formation and maintenance of various skin appendages, specifically in determining shape and orientation of hair. Required for the correct growth of hair follicles, in particular for the persistence of the anagen (growth) state. Modulates the function of TNF-alpha in the specific context of hair cycling. Regulates protein synthesis and epithelial cell growth through binding to the adapter protein SFN and by stimulating Akt/mTOR pathway. Involved in tissue repair. May be a marker of basal cell differentiation in complex epithelia and therefore indicative of a certain type of epithelial 'stem cells'. Acts as a promoter of epithelial proliferation by acting a regulator of immune response in skin: promotes Th1/Th17-dominated immune environment contributing to the development of basaloid skin tumors. May act as an autoantigen in the immunopathogenesis of psoriasis, with certain peptide regions being a major target for autoreactive T-cells and hence causing their proliferation. The protein is Keratin, type I cytoskeletal 17 of Rattus norvegicus (Rat).